A 219-amino-acid polypeptide reads, in one-letter code: 7-cyano-7-deazaguanine synthase (219 aa).

10–20 provides a ligand contact to ATP; sequence FSGGQDSTTCL. The Zn(2+) site is built by cysteine 188, cysteine 196, cysteine 199, and cysteine 202.

The protein belongs to the QueC family. Zn(2+) serves as cofactor.

It catalyses the reaction 7-carboxy-7-deazaguanine + NH4(+) + ATP = 7-cyano-7-deazaguanine + ADP + phosphate + H2O + H(+). It functions in the pathway purine metabolism; 7-cyano-7-deazaguanine biosynthesis. Catalyzes the ATP-dependent conversion of 7-carboxy-7-deazaguanine (CDG) to 7-cyano-7-deazaguanine (preQ(0)). The polypeptide is 7-cyano-7-deazaguanine synthase (Neisseria meningitidis serogroup A / serotype 4A (strain DSM 15465 / Z2491)).